A 649-amino-acid chain; its full sequence is DNA mismatch repair protein MutL (649 aa).

Belongs to the DNA mismatch repair MutL/HexB family.

Functionally, this protein is involved in the repair of mismatches in DNA. It is required for dam-dependent methyl-directed DNA mismatch repair. May act as a 'molecular matchmaker', a protein that promotes the formation of a stable complex between two or more DNA-binding proteins in an ATP-dependent manner without itself being part of a final effector complex. This is DNA mismatch repair protein MutL from Streptococcus pneumoniae (strain JJA).